The sequence spans 144 residues: Nucleoside diphosphate kinase (144 aa).

6 residues coordinate ATP: Lys-11, Phe-59, Arg-87, Thr-93, Arg-104, and Asn-114. His-117 serves as the catalytic Pros-phosphohistidine intermediate.

It belongs to the NDK family. Homotetramer. Requires Mg(2+) as cofactor.

The protein resides in the cytoplasm. The catalysed reaction is a 2'-deoxyribonucleoside 5'-diphosphate + ATP = a 2'-deoxyribonucleoside 5'-triphosphate + ADP. The enzyme catalyses a ribonucleoside 5'-diphosphate + ATP = a ribonucleoside 5'-triphosphate + ADP. Its function is as follows. Major role in the synthesis of nucleoside triphosphates other than ATP. The ATP gamma phosphate is transferred to the NDP beta phosphate via a ping-pong mechanism, using a phosphorylated active-site intermediate. In Sorangium cellulosum (strain So ce56) (Polyangium cellulosum (strain So ce56)), this protein is Nucleoside diphosphate kinase.